A 603-amino-acid polypeptide reads, in one-letter code: Grainyhead-like protein 3 homolog (603 aa).

The tract at residues E30–D95 is transcription activation. The region spanning G226 to I461 is the Grh/CP2 DB domain.

It belongs to the grh/CP2 family. Grainyhead subfamily. Homodimer, also forms heterodimers with GRHL1 and GRHL2. Interacts with LMO4.

It is found in the nucleus. In terms of biological role, transcription factor playing important roles in primary neurulation and in the differentiation of stratified epithelia of both ectodermal and endodermal origin. Binds directly to the consensus DNA sequence 5'-AACCGGTT-3' acting as an activator and repressor on distinct target genes. Essential for epidermal differentiation and barrier formation at the end of embryogenesis with TGM3 as critical direct target. Exhibits functional redundancy with GRHL2 in epidermal morphogenetic events such as eyelid fusion and epidermal wound repair. Despite being dispensable during normal epidermal homeostasis in the adulthood, is again required for barrier repair after immune-mediated epidermal damage, regulates distinct gene batteries in embryonic epidermal differentiation and adult epidermal barrier reformation after injury. Plays unique and cooperative roles with GRHL2 in establishing distinct zones of primary neurulation. Essential for spinal closure, functions cooperatively with GRHL2 in closure 2 (forebrain/midbrain boundary) and posterior neuropore closure. Also required for proper development of the oral periderm. No genetic interaction with GRHL1, no functional cooperativity due to diverse target gene selectivity. In Mus musculus (Mouse), this protein is Grainyhead-like protein 3 homolog.